Consider the following 178-residue polypeptide: Probable chorismate pyruvate-lyase (178 aa).

Positions 73, 111, and 163 each coordinate substrate.

The protein belongs to the UbiC family.

The protein resides in the cytoplasm. The catalysed reaction is chorismate = 4-hydroxybenzoate + pyruvate. The protein operates within cofactor biosynthesis; ubiquinone biosynthesis. Functionally, removes the pyruvyl group from chorismate, with concomitant aromatization of the ring, to provide 4-hydroxybenzoate (4HB) for the ubiquinone pathway. This Pseudomonas aeruginosa (strain UCBPP-PA14) protein is Probable chorismate pyruvate-lyase.